Consider the following 372-residue polypeptide: F-box/kelch-repeat protein At4g14905 (372 aa).

The F-box domain occupies Leu-34 to Arg-74. Kelch repeat units lie at residues Glu-137–Gly-183, Lys-184–Met-229, and Lys-232–Gln-280.

The sequence is that of F-box/kelch-repeat protein At4g14905 from Arabidopsis thaliana (Mouse-ear cress).